The following is a 411-amino-acid chain: S-inosyl-L-homocysteine hydrolase (411 aa).

2 residues coordinate substrate: aspartate 121 and glutamate 146. Residue 147-149 (TTT) participates in NAD(+) binding. 2 residues coordinate substrate: lysine 176 and aspartate 180. NAD(+)-binding positions include asparagine 181, 210–215 (GYGWCG), glutamate 233, asparagine 268, 289–291 (SGH), and asparagine 335.

It belongs to the adenosylhomocysteinase family. Requires NAD(+) as cofactor.

The protein resides in the cytoplasm. It carries out the reaction S-inosyl-L-homocysteine + H2O = L-homocysteine + inosine. It participates in amino-acid biosynthesis; S-adenosyl-L-methionine biosynthesis. Functionally, catalyzes the hydrolysis of S-inosyl-L-homocysteine (SIH) to L-homocysteine (Hcy) and inosine. Likely functions in a S-adenosyl-L-methionine (SAM) recycling pathway from S-adenosyl-L-homocysteine (SAH) produced from SAM-dependent methylation reactions. Can also catalyze the reverse reaction in vitro, i.e. the synthesis of SIH from Hcy and inosine. This Methanosarcina acetivorans (strain ATCC 35395 / DSM 2834 / JCM 12185 / C2A) protein is S-inosyl-L-homocysteine hydrolase.